Here is a 144-residue protein sequence, read N- to C-terminus: Acidic phospholipase A2 S15-109 (144 aa).

The N-terminal stretch at 1-19 (MYPAHLLVLLAVCVSLLGA) is a signal peptide. Positions 20 to 27 (SDIPPQPL) are excised as a propeptide. Intrachain disulfides connect cysteine 38–cysteine 98, cysteine 54–cysteine 143, cysteine 56–cysteine 72, cysteine 71–cysteine 126, cysteine 78–cysteine 119, cysteine 87–cysteine 112, and cysteine 105–cysteine 117. Residues tyrosine 55, glycine 57, and glycine 59 each contribute to the Ca(2+) site. The active site involves histidine 75. Residue aspartate 76 coordinates Ca(2+). Aspartate 120 is a catalytic residue.

Belongs to the phospholipase A2 family. Group I subfamily. D49 sub-subfamily. Requires Ca(2+) as cofactor. Expressed by the venom gland.

The protein localises to the secreted. It catalyses the reaction a 1,2-diacyl-sn-glycero-3-phosphocholine + H2O = a 1-acyl-sn-glycero-3-phosphocholine + a fatty acid + H(+). Snake venom phospholipase A2 (PLA2) that inhibits collagen-induced platelet aggregation. PLA2 catalyzes the calcium-dependent hydrolysis of the 2-acyl groups in 3-sn-phosphoglycerides. This chain is Acidic phospholipase A2 S15-109, found in Austrelaps superbus (Lowland copperhead snake).